Here is a 151-residue protein sequence, read N- to C-terminus: Deoxyuridine 5'-triphosphate nucleotidohydrolase (151 aa).

Residues 70-72 (RSG), Asn-83, 87-89 (LID), and Met-97 each bind substrate.

The protein belongs to the dUTPase family. Mg(2+) serves as cofactor.

The enzyme catalyses dUTP + H2O = dUMP + diphosphate + H(+). Its pathway is pyrimidine metabolism; dUMP biosynthesis; dUMP from dCTP (dUTP route): step 2/2. Its function is as follows. This enzyme is involved in nucleotide metabolism: it produces dUMP, the immediate precursor of thymidine nucleotides and it decreases the intracellular concentration of dUTP so that uracil cannot be incorporated into DNA. This chain is Deoxyuridine 5'-triphosphate nucleotidohydrolase, found in Actinobacillus pleuropneumoniae serotype 7 (strain AP76).